Here is a 199-residue protein sequence, read N- to C-terminus: Probable GTP-binding protein EngB (199 aa).

One can recognise an EngB-type G domain in the interval 21 to 196 (TKPEYAFIGR…LTYIDEINKQ (176 aa)). GTP-binding positions include 29 to 36 (GRSNVGKS), 56 to 60 (GKTQL), 74 to 77 (DLPG), 141 to 144 (TKID), and 175 to 177 (TSS). Mg(2+) is bound by residues S36 and T58.

This sequence belongs to the TRAFAC class TrmE-Era-EngA-EngB-Septin-like GTPase superfamily. EngB GTPase family. Mg(2+) is required as a cofactor.

Necessary for normal cell division and for the maintenance of normal septation. In Cytophaga hutchinsonii (strain ATCC 33406 / DSM 1761 / CIP 103989 / NBRC 15051 / NCIMB 9469 / D465), this protein is Probable GTP-binding protein EngB.